A 77-amino-acid polypeptide reads, in one-letter code: Ubiquitin-like protein NEDD8 (77 aa).

The segment at 70 to 72 (VLA) is interaction with uba-3. G76 participates in a covalent cross-link: Glycyl lysine isopeptide (Gly-Lys) (interchain with K-? in acceptor proteins). F77 is a propeptide.

Belongs to the ubiquitin family. In terms of assembly, interacts with dcn-1. Covalently attached to cullins. May interact with atx-3. In terms of processing, cleavage of precursor form is necessary for function.

It localises to the nucleus. Its subcellular location is the cytoplasm. Ubiquitin-like protein which plays an important role in cell cycle control and embryogenesis. Covalent attachment to its substrates requires prior activation by the E1 complex uba-3-ula-1 and linkage to the E2 enzyme ubc-12. Attachment of ned-8 to cullins activates their associated E3 ubiquitin ligase activity, and thus promotes polyubiquitination and proteasomal degradation of cyclins and other regulatory proteins. This chain is Ubiquitin-like protein NEDD8 (ned-8), found in Caenorhabditis elegans.